Consider the following 194-residue polypeptide: FMN-dependent NADH:quinone oxidoreductase (194 aa).

FMN contacts are provided by residues S10 and 90-93 (MYNL).

This sequence belongs to the azoreductase type 1 family. Homodimer. FMN is required as a cofactor.

The enzyme catalyses 2 a quinone + NADH + H(+) = 2 a 1,4-benzosemiquinone + NAD(+). The catalysed reaction is N,N-dimethyl-1,4-phenylenediamine + anthranilate + 2 NAD(+) = 2-(4-dimethylaminophenyl)diazenylbenzoate + 2 NADH + 2 H(+). Functionally, quinone reductase that provides resistance to thiol-specific stress caused by electrophilic quinones. Also exhibits azoreductase activity. Catalyzes the reductive cleavage of the azo bond in aromatic azo compounds to the corresponding amines. This chain is FMN-dependent NADH:quinone oxidoreductase, found in Haemophilus influenzae (strain ATCC 51907 / DSM 11121 / KW20 / Rd).